Here is a 184-residue protein sequence, read N- to C-terminus: UPF0398 protein BCAH820_1652 (184 aa).

Belongs to the UPF0398 family.

The polypeptide is UPF0398 protein BCAH820_1652 (Bacillus cereus (strain AH820)).